The sequence spans 185 residues: Homeobox expressed in ES cells 1 (185 aa).

The segment at residues 108–167 (GRRPRTAFTQNQIEVLENVFRVNCYPGIDIREDLAQKLNLEEDRIQIWFQNRRAKLKRSH) is a DNA-binding region (homeobox).

Belongs to the ANF homeobox family. Can form heterodimers with PROP1 in binding to DNA. Interacts with TLE1.

The protein localises to the nucleus. Required for the normal development of the forebrain, eyes and other anterior structures such as the olfactory placodes and pituitary gland. Possible transcriptional repressor. Binds to the palindromic PIII sequence, 5'-AGCTTGAGTCTAATTGAATTAACTGTAC-3'. HESX1 and PROP1 bind as heterodimers on this palindromic site, and, in vitro, HESX1 can antagonize PROP1 activation. The sequence is that of Homeobox expressed in ES cells 1 (HESX1) from Pan paniscus (Pygmy chimpanzee).